The primary structure comprises 363 residues: Protein-glutamate methylesterase/protein-glutamine glutaminase 2 (363 aa).

One can recognise a Response regulatory domain in the interval 7-124; it reads RVLVVDDSAL…SLTLENVADE (118 aa). Position 58 is a 4-aspartylphosphate (D58). The 198-residue stretch at 160–357 folds into the CheB-type methylesterase domain; sequence PVASRTTPSK…NLLMVQSAAQ (198 aa). Active-site residues include S176, H203, and D299.

Belongs to the CheB family. Phosphorylated by CheA. Phosphorylation of the N-terminal regulatory domain activates the methylesterase activity.

It is found in the cytoplasm. It carries out the reaction [protein]-L-glutamate 5-O-methyl ester + H2O = L-glutamyl-[protein] + methanol + H(+). The catalysed reaction is L-glutaminyl-[protein] + H2O = L-glutamyl-[protein] + NH4(+). Functionally, involved in chemotaxis. Part of a chemotaxis signal transduction system that modulates chemotaxis in response to various stimuli. Catalyzes the demethylation of specific methylglutamate residues introduced into the chemoreceptors (methyl-accepting chemotaxis proteins or MCP) by CheR. Also mediates the irreversible deamidation of specific glutamine residues to glutamic acid. The sequence is that of Protein-glutamate methylesterase/protein-glutamine glutaminase 2 from Koribacter versatilis (strain Ellin345).